A 427-amino-acid chain; its full sequence is Dihydrofolate synthetase (427 aa).

An ATP-binding site is contributed by 34–37 (GKGS). Positions 123 and 153 each coordinate Mg(2+). 2 residues coordinate ATP: R275 and D296.

Belongs to the folylpolyglutamate synthase family.

Its subcellular location is the cytoplasm. It carries out the reaction 7,8-dihydropteroate + L-glutamate + ATP = 7,8-dihydrofolate + ADP + phosphate + H(+). It functions in the pathway cofactor biosynthesis; tetrahydrofolylpolyglutamate biosynthesis. Its function is as follows. Glutamate-adding enzyme which catalyzes the binding of the first glutamyl side chain to dihydropteroate. Leads to the de nove synthesis of tetrahydrofolate. In Saccharomyces cerevisiae (strain ATCC 204508 / S288c) (Baker's yeast), this protein is Dihydrofolate synthetase (FOL3).